A 639-amino-acid polypeptide reads, in one-letter code: Extracellular metalloproteinase 1 (639 aa).

The N-terminal stretch at 1-19 (MHGLLLAAGLISLPLHVLA) is a signal peptide. Residues 20-250 (HPQPSSTSLA…VHNVVDYVAH (231 aa)) constitute a propeptide that is removed on maturation. An N-linked (GlcNAc...) asparagine glycan is attached at asparagine 291. Histidine 434 provides a ligand contact to Zn(2+). Glutamate 435 is an active-site residue. Residue histidine 438 participates in Zn(2+) binding. The N-linked (GlcNAc...) asparagine glycan is linked to asparagine 598.

This sequence belongs to the peptidase M36 family. The cofactor is Zn(2+).

The protein localises to the secreted. Its function is as follows. Secreted metalloproteinase probably acting as a virulence factor. This chain is Extracellular metalloproteinase 1 (MEP1), found in Arthroderma otae (strain ATCC MYA-4605 / CBS 113480) (Microsporum canis).